Here is a 407-residue protein sequence, read N- to C-terminus: MLIISYIALCLLFIVYLYTLSVRIEGKIINVMVPYLIITVPTLYVFEGIFVYLSEVQNYTVEYLFFYTCYITYIASFVISYLYTQRKPIYNKSNTKNKPRYVFTSLLFTFLAFIIYLPVLMEFREYILSPRRIYELTRTGYGIYFYPSLMFSLVASICAFFTYKKSKLFCISIVLFNCILIFLHGNKGPIFSIFIAFILYLSYIENKKIKFMFLVKSFAVIAVIVTAFFAYTFTDGNPIENMANYSDYTRNAVLVASSNFDFMYGKLLMESEVYSRIPRAIWPDKPEDFGALYLAKVFFPDAFYRNQGAPAFGYGELYADFGLFTPVWLVISGVFKGVLAKYFSNKTQETKSAHYFIMFLFCIGISVIPVSMGWLFPEHLMIAFMVYIASSFVFSEHIRFVLLRNNK.

11 consecutive transmembrane segments (helical) span residues 2-22 (LIIS…TLSV), 31-51 (VMVP…GIFV), 63-83 (YLFF…SYLY), 101-121 (YVFT…PVLM), 141-161 (YGIY…CAFF), 168-185 (LFCI…FLHG), 190-204 (IFSI…LSYI), 211-231 (FMFL…FFAY), 319-339 (ADFG…KGVL), 356-376 (FIMF…GWLF), and 382-402 (IAFM…RFVL).

Its subcellular location is the cell inner membrane. The catalysed reaction is n lipid-linked O-antigen repeat units = a lipid-linked O antigen + (n-1) polyisoprenyl diphosphate.. It participates in bacterial outer membrane biogenesis; LPS O-antigen biosynthesis. Functionally, polymerase involved in the biosynthesis of the lipopolysaccharide (LPS). Catalyzes the polymerization of the O-antigen repeat units on the periplasmic face of the inner membrane, leading to the formation of the lipid-linked O-antigen molecule. In Salmonella typhi, this protein is O-antigen polymerase (rfc).